Here is a 200-residue protein sequence, read N- to C-terminus: Superoxide dismutase [Mn] 2 (200 aa).

4 residues coordinate Mn(2+): His28, His76, Asp158, and His162.

It belongs to the iron/manganese superoxide dismutase family. Mn(2+) serves as cofactor.

It carries out the reaction 2 superoxide + 2 H(+) = H2O2 + O2. In terms of biological role, destroys superoxide anion radicals which are normally produced within the cells and which are toxic to biological systems. The polypeptide is Superoxide dismutase [Mn] 2 (sod2) (Halobacterium salinarum (strain ATCC 700922 / JCM 11081 / NRC-1) (Halobacterium halobium)).